Consider the following 305-residue polypeptide: Dihydroorotate dehydrogenase B (NAD(+)), catalytic subunit (305 aa).

FMN is bound by residues Ser-21 and 45–46 (KG). Residues Lys-45 and 69–73 (NAVGL) contribute to the substrate site. FMN contacts are provided by Asn-99 and Asn-127. Substrate is bound at residue Asn-127. Catalysis depends on Cys-130, which acts as the Nucleophile. FMN is bound by residues Lys-165 and Ile-191. 192 to 193 (NT) is a binding site for substrate. FMN-binding positions include Gly-217, 243-244 (GG), and 265-266 (GT).

This sequence belongs to the dihydroorotate dehydrogenase family. Type 1 subfamily. Heterotetramer of 2 PyrK and 2 PyrD type B subunits. FMN serves as cofactor.

Its subcellular location is the cytoplasm. The catalysed reaction is (S)-dihydroorotate + NAD(+) = orotate + NADH + H(+). It functions in the pathway pyrimidine metabolism; UMP biosynthesis via de novo pathway; orotate from (S)-dihydroorotate (NAD(+) route): step 1/1. Its function is as follows. Catalyzes the conversion of dihydroorotate to orotate with NAD(+) as electron acceptor. In Parabacteroides distasonis (strain ATCC 8503 / DSM 20701 / CIP 104284 / JCM 5825 / NCTC 11152), this protein is Dihydroorotate dehydrogenase B (NAD(+)), catalytic subunit (pyrD).